We begin with the raw amino-acid sequence, 890 residues long: Inter-alpha-trypsin inhibitor heavy chain H3 (890 aa).

An N-terminal signal peptide occupies residues 1–20; the sequence is MAFAWWPCLILALLSSLAAS. The propeptide occupies 21 to 34; the sequence is GFPRSPFRLLGKRS. The VIT domain maps to 29–158; sequence LLGKRSLPEG…KVTFELTYEE (130 aa). N91 carries an N-linked (GlcNAc...) asparagine glycan. Residues 284–467 form the VWFA domain; it reads NVAFVIDISG…LQLQGFYEEV (184 aa). N580 carries an N-linked (GlcNAc...) asparagine glycan. The residue at position 651 (D651) is an Aspartate 1-(chondroitin 4-sulfate)-ester. Residues 652–890 constitute a propeptide that is removed on maturation; it reads PHFIIQIPEK…HTDYIVPNLF (239 aa).

It belongs to the ITIH family. As to quaternary structure, I-alpha-I plasma protease inhibitors are assembled from one or two heavy chains (HC) and one light chain, bikunin. Pre-alpha-inhibitor (P-alpha-I) is composed of ITIH3/HC3 and bikunin. Heavy chains are linked to bikunin via chondroitin 4-sulfate esterified to the alpha-carboxyl of the C-terminal aspartate after propeptide cleavage.

The protein localises to the secreted. May act as a carrier of hyaluronan in serum or as a binding protein between hyaluronan and other matrix protein, including those on cell surfaces in tissues to regulate the localization, synthesis and degradation of hyaluronan which are essential to cells undergoing biological processes. This Homo sapiens (Human) protein is Inter-alpha-trypsin inhibitor heavy chain H3 (ITIH3).